We begin with the raw amino-acid sequence, 285 residues long: Bifunctional protein FolD (285 aa).

NADP(+) contacts are provided by residues G166–S168, S191, and I232.

The protein belongs to the tetrahydrofolate dehydrogenase/cyclohydrolase family. Homodimer.

The catalysed reaction is (6R)-5,10-methylene-5,6,7,8-tetrahydrofolate + NADP(+) = (6R)-5,10-methenyltetrahydrofolate + NADPH. It carries out the reaction (6R)-5,10-methenyltetrahydrofolate + H2O = (6R)-10-formyltetrahydrofolate + H(+). It participates in one-carbon metabolism; tetrahydrofolate interconversion. Functionally, catalyzes the oxidation of 5,10-methylenetetrahydrofolate to 5,10-methenyltetrahydrofolate and then the hydrolysis of 5,10-methenyltetrahydrofolate to 10-formyltetrahydrofolate. The sequence is that of Bifunctional protein FolD from Edwardsiella ictaluri (strain 93-146).